The chain runs to 630 residues: Biosynthetic arginine decarboxylase (630 aa).

K99 is modified (N6-(pyridoxal phosphate)lysine). 281–291 (VDIGGGLGVDY) contacts substrate.

Belongs to the Orn/Lys/Arg decarboxylase class-II family. SpeA subfamily. Requires Mg(2+) as cofactor. Pyridoxal 5'-phosphate serves as cofactor.

It carries out the reaction L-arginine + H(+) = agmatine + CO2. Its pathway is amine and polyamine biosynthesis; agmatine biosynthesis; agmatine from L-arginine: step 1/1. Its function is as follows. Catalyzes the biosynthesis of agmatine from arginine. The sequence is that of Biosynthetic arginine decarboxylase from Phocaeicola vulgatus (strain ATCC 8482 / DSM 1447 / JCM 5826 / CCUG 4940 / NBRC 14291 / NCTC 11154) (Bacteroides vulgatus).